The following is a 669-amino-acid chain: Matrix metalloproteinase-15 (669 aa).

A signal peptide (or 45) is located at residues 1 to 41 (MGSDPSAPGRPGWTGSLLGDREEAARPRLLPLLLVLLGCLG). The propeptide occupies 42–131 (LGVAAEDAEV…KANLRRRRKR (90 aa)). Positions 109 to 116 (PRCGVPDQ) match the Cysteine switch motif. Cysteine 111 contributes to the Zn(2+) binding site. Topologically, residues 132–625 (YALTGRKWNN…QMEEVARTVN (494 aa)) are extracellular. An N-linked (GlcNAc...) asparagine glycan is attached at asparagine 150. Zn(2+) is bound at residue histidine 259. The active site involves glutamate 260. The Zn(2+) site is built by histidine 263 and histidine 269. The segment at 300–370 (QQLYGTPDGQ…RPDQYGPNIC (71 aa)) is disordered. Residues 305–322 (TPDGQPQPTQPLPTVTPR) show a composition bias toward low complexity. Over residues 333–342 (RPPQPPPPGG) the composition is skewed to pro residues. 4 Hemopexin repeats span residues 367–415 (PNIC…WRGL), 416–461 (PGDI…GLGI), 463–511 (YDRI…QGIP), and 512–559 (ASPK…FMGC). Cysteine 370 and cysteine 559 are disulfide-bonded. Residues 574 to 593 (RPPFNPHGGAEPGADSAEGD) form a disordered region. Serine 589 carries the phosphoserine modification. A helical transmembrane segment spans residues 626-646 (VVMVLVPLLLLLCVLGLTYAL). At 647–669 (VQMQRKGAPRVLLYCKRSLQEWV) the chain is on the cytoplasmic side.

Belongs to the peptidase M10A family. The cofactor is Zn(2+). Requires Ca(2+) as cofactor. The precursor is cleaved by a furin endopeptidase. In terms of tissue distribution, appeared to be synthesized preferentially in liver, placenta, testis, colon and intestine. Substantial amounts are also detected in pancreas, kidney, lung, heart and skeletal muscle.

The protein resides in the membrane. Endopeptidase that degrades various components of the extracellular matrix. May activate progelatinase A. This Homo sapiens (Human) protein is Matrix metalloproteinase-15 (MMP15).